Consider the following 306-residue polypeptide: Pantothenate kinase (306 aa).

ATP is bound at residue 91–98 (GSVAVGKS).

The protein belongs to the prokaryotic pantothenate kinase family.

It localises to the cytoplasm. It carries out the reaction (R)-pantothenate + ATP = (R)-4'-phosphopantothenate + ADP + H(+). The protein operates within cofactor biosynthesis; coenzyme A biosynthesis; CoA from (R)-pantothenate: step 1/5. The protein is Pantothenate kinase of Streptococcus equi subsp. zooepidemicus (strain H70).